The chain runs to 507 residues: Trigger factor (507 aa).

One can recognise a PPIase FKBP-type domain in the interval 162–243 (GDFVSLDLSA…VRGVKEKELP (82 aa)). Residues 434–507 (NLPRRPSGEA…DSELPASETK (74 aa)) form a disordered region. Positions 442-460 (EAEDDVRDISDELDAEELE) are enriched in acidic residues. A compositionally biased stretch (low complexity) spans 461-488 (VPAAAPSAEVTAAAGDEATATATATDAD).

This sequence belongs to the FKBP-type PPIase family. Tig subfamily.

The protein localises to the cytoplasm. The enzyme catalyses [protein]-peptidylproline (omega=180) = [protein]-peptidylproline (omega=0). Its function is as follows. Involved in protein export. Acts as a chaperone by maintaining the newly synthesized protein in an open conformation. Functions as a peptidyl-prolyl cis-trans isomerase. The chain is Trigger factor from Parafrankia sp. (strain EAN1pec).